The primary structure comprises 179 residues: MLGVQRGECEDRPERAEPLSDAEMEIIQHTWGHVYKNCEDVGVSVLIRFFVNFPSAKQYFSQFQDMQDPEEMEKSSQLRQHARRVMNAINTVVENLQDPEKVSSVLALVGKAHAVKHKVEPIYFKIXSGVMLSVLSEDFPEFFTAEVQLVWTKLMAAVYWHVTGAYTEVGWLQVSSSAV.

Residues P18–T167 form the Globin domain. Residues H81 and H113 each coordinate heme b.

This sequence belongs to the globin family. Monomeric.

It is found in the cytoplasm. Its subcellular location is the nucleus. The catalysed reaction is Fe(II)-heme b-[protein] + nitric oxide + O2 = Fe(III)-heme b-[protein] + nitrate. It catalyses the reaction Fe(III)-heme b-[protein] + nitric oxide + H2O = Fe(II)-heme b-[protein] + nitrite + 2 H(+). The enzyme catalyses 2 superoxide + 2 H(+) = H2O2 + O2. It carries out the reaction H2O2 + AH2 = A + 2 H2O. Its function is as follows. Probable multifunctional globin with a hexacoordinated heme iron required for the catalysis of various reactions depending on redox condition of the cell as well as oxygen availability. Has a nitric oxide dioxygenase (NOD) activity and is most probably involved in cell-mediated and oxygen-dependent nitric oxide consumption. Under normoxic conditions functions as a nitric oxide dioxygenase (NOD) but under hypoxic conditions the globin may switch its function to that of a nitrite (NO2) reductase (NiR), generating nitric oxide. Could also have peroxidase and superoxide dismutase activities, detoxifying reactive oxygen species and protecting cells against oxidative stress. Also binds dioxygen with low affinity and could function as an oxygen sensor but has probably no function as a respiratory oxygen carrier. The protein is Cytoglobin-2 of Oryzias latipes (Japanese rice fish).